Reading from the N-terminus, the 24-residue chain is Large ribosomal subunit protein uL10 (24 aa).

It belongs to the universal ribosomal protein uL10 family. In terms of assembly, part of the ribosomal stalk of the 50S ribosomal subunit. The N-terminus interacts with L11 and the large rRNA to form the base of the stalk. The C-terminus forms an elongated spine to which L12 dimers bind in a sequential fashion forming a multimeric L10(L12)X complex.

In terms of biological role, forms part of the ribosomal stalk, playing a central role in the interaction of the ribosome with GTP-bound translation factors. The sequence is that of Large ribosomal subunit protein uL10 (rplJ) from Enterobacter cloacae.